Consider the following 523-residue polypeptide: Probable lipid II flippase MurJ (523 aa).

Helical transmembrane passes span alanine 98–valine 118, isoleucine 146–alanine 166, phenylalanine 170–methionine 190, glycine 201–leucine 221, methionine 246–phenylalanine 266, leucine 284–leucine 304, leucine 328–valine 348, valine 360–serine 380, valine 395–methionine 415, glycine 422–leucine 442, phenylalanine 461–glutamine 481, and leucine 489–leucine 509.

This sequence belongs to the MurJ/MviN family.

The protein resides in the cell inner membrane. It participates in cell wall biogenesis; peptidoglycan biosynthesis. Involved in peptidoglycan biosynthesis. Transports lipid-linked peptidoglycan precursors from the inner to the outer leaflet of the cytoplasmic membrane. This is Probable lipid II flippase MurJ from Bdellovibrio bacteriovorus (strain ATCC 15356 / DSM 50701 / NCIMB 9529 / HD100).